The sequence spans 224 residues: Lipoprotein-releasing system ATP-binding protein LolD (224 aa).

The 221-residue stretch at 4–224 (YTAKDISKNY…TLLDGSLQEE (221 aa)) folds into the ABC transporter domain. 40 to 47 (GASGSGKT) contributes to the ATP binding site.

It belongs to the ABC transporter superfamily. Lipoprotein translocase (TC 3.A.1.125) family. In terms of assembly, the complex is composed of two ATP-binding proteins (LolD) and two transmembrane proteins (LolC and LolE).

It is found in the cell inner membrane. Its function is as follows. Part of the ABC transporter complex LolCDE involved in the translocation of mature outer membrane-directed lipoproteins, from the inner membrane to the periplasmic chaperone, LolA. Responsible for the formation of the LolA-lipoprotein complex in an ATP-dependent manner. The sequence is that of Lipoprotein-releasing system ATP-binding protein LolD from Desulfotalea psychrophila (strain LSv54 / DSM 12343).